A 329-amino-acid chain; its full sequence is MIRIAIDAMGGDFGPEPIIEGVVQALEEKTFQPILVGDKEEILSLLPQYYIDKVEIVEATDVIDMSDQATNALKRKDSSIYKAVELVRNKEADAVLSAGHSGATMTLATLRMGRLPHISKPALATLMPSLGKNKTLVLDVGAVTDCTPQNLYEFGAMGEAYVEKILNIRNPRVGLLSNGSEDSKGNALTKEAFVLLKNLRGFVGNVEGKDIFNGKVDVVVCDGFTGNIMLKASEGVVTTVFELMKQYIRKSLPAKIGALMMRKKVFANMKRQVDKDEYGGAPLLGVDGCAIVSHGASNAKAIKNAIFQAILFTESGVNSQIEELLSEKE.

It belongs to the PlsX family. Homodimer. Probably interacts with PlsY.

The protein resides in the cytoplasm. It catalyses the reaction a fatty acyl-[ACP] + phosphate = an acyl phosphate + holo-[ACP]. It functions in the pathway lipid metabolism; phospholipid metabolism. In terms of biological role, catalyzes the reversible formation of acyl-phosphate (acyl-PO(4)) from acyl-[acyl-carrier-protein] (acyl-ACP). This enzyme utilizes acyl-ACP as fatty acyl donor, but not acyl-CoA. This is Phosphate acyltransferase from Sulfurovum sp. (strain NBC37-1).